The sequence spans 222 residues: tRNA (guanine-N(1)-)-methyltransferase (222 aa).

S-adenosyl-L-methionine-binding positions include Gly112 and 132 to 137 (IGDYVL).

Belongs to the RNA methyltransferase TrmD family. Homodimer.

The protein localises to the cytoplasm. The enzyme catalyses guanosine(37) in tRNA + S-adenosyl-L-methionine = N(1)-methylguanosine(37) in tRNA + S-adenosyl-L-homocysteine + H(+). In terms of biological role, specifically methylates guanosine-37 in various tRNAs. The protein is tRNA (guanine-N(1)-)-methyltransferase of Azobacteroides pseudotrichonymphae genomovar. CFP2.